We begin with the raw amino-acid sequence, 251 residues long: 3-deoxy-manno-octulosonate cytidylyltransferase (251 aa).

Belongs to the KdsB family.

The protein resides in the cytoplasm. It catalyses the reaction 3-deoxy-alpha-D-manno-oct-2-ulosonate + CTP = CMP-3-deoxy-beta-D-manno-octulosonate + diphosphate. The protein operates within nucleotide-sugar biosynthesis; CMP-3-deoxy-D-manno-octulosonate biosynthesis; CMP-3-deoxy-D-manno-octulosonate from 3-deoxy-D-manno-octulosonate and CTP: step 1/1. It functions in the pathway bacterial outer membrane biogenesis; lipopolysaccharide biosynthesis. Functionally, activates KDO (a required 8-carbon sugar) for incorporation into bacterial lipopolysaccharide in Gram-negative bacteria. This Brucella abortus (strain 2308) protein is 3-deoxy-manno-octulosonate cytidylyltransferase.